The chain runs to 76 residues: Conotoxin Vc6.9 (76 aa).

Residues Met1–Ala19 form the signal peptide. Positions Leu20 to Glu41 are excised as a propeptide. Cystine bridges form between Cys49-Cys63, Cys56-Cys67, and Cys62-Cys72.

The protein belongs to the conotoxin O2 superfamily. Expressed by the venom duct.

It is found in the secreted. Its function is as follows. Inhibits voltage-gated ion channels. The polypeptide is Conotoxin Vc6.9 (Conus victoriae (Queen Victoria cone)).